A 333-amino-acid chain; its full sequence is Foldase protein PrsA (333 aa).

Residues 1-22 (MKKSTKLLAGIVTLASAMTLAA) form the signal peptide. A lipid anchor (N-palmitoyl cysteine) is attached at C23. The S-diacylglycerol cysteine moiety is linked to residue C23. In terms of domain architecture, PpiC spans 145-240 (TPEMTTQVTT…NKFYIVKVTK (96 aa)). The tract at residues 301–333 (DKKASKANTSKSDQKSSSDSSKDSQSSKSKSEK) is disordered. Residues 312–322 (SDQKSSSDSSK) show a composition bias toward basic and acidic residues. Residues 323 to 333 (DSQSSKSKSEK) show a composition bias toward low complexity.

The protein belongs to the PrsA family.

It is found in the cell membrane. The enzyme catalyses [protein]-peptidylproline (omega=180) = [protein]-peptidylproline (omega=0). Functionally, plays a major role in protein secretion by helping the post-translocational extracellular folding of several secreted proteins. The sequence is that of Foldase protein PrsA from Streptococcus equi subsp. equi (strain 4047).